We begin with the raw amino-acid sequence, 131 residues long: Small ribosomal subunit protein uS9 (131 aa).

This sequence belongs to the universal ribosomal protein uS9 family.

The sequence is that of Small ribosomal subunit protein uS9 from Mesoplasma florum (strain ATCC 33453 / NBRC 100688 / NCTC 11704 / L1) (Acholeplasma florum).